A 401-amino-acid polypeptide reads, in one-letter code: Argininosuccinate synthase (401 aa).

A9–S17 is an ATP binding site. Y86 contributes to the L-citrulline binding site. G116 contributes to the ATP binding site. L-aspartate contacts are provided by T118, N122, and D123. N122 contacts L-citrulline. L-citrulline-binding residues include R126, S174, S183, E259, and Y271.

Belongs to the argininosuccinate synthase family. Type 1 subfamily. As to quaternary structure, homotetramer.

The protein resides in the cytoplasm. It carries out the reaction L-citrulline + L-aspartate + ATP = 2-(N(omega)-L-arginino)succinate + AMP + diphosphate + H(+). Its pathway is amino-acid biosynthesis; L-arginine biosynthesis; L-arginine from L-ornithine and carbamoyl phosphate: step 2/3. This is Argininosuccinate synthase from Bacillus anthracis (strain A0248).